The primary structure comprises 588 residues: Probable metalloprotease ARX1 (588 aa).

This sequence belongs to the peptidase M24 family. Component of the nucleoplasmic and cytoplasmic pre-60S ribosomal particles.

It localises to the cytoplasm. The protein resides in the nucleus. Its function is as follows. Probable metalloprotease involved in proper assembly of pre-ribosomal particles during the biogenesis of the 60S ribosomal subunit. Accompanies the pre-60S particles to the cytoplasm. The polypeptide is Probable metalloprotease ARX1 (ARX1) (Candida glabrata (strain ATCC 2001 / BCRC 20586 / JCM 3761 / NBRC 0622 / NRRL Y-65 / CBS 138) (Yeast)).